We begin with the raw amino-acid sequence, 699 residues long: Endogenous retrovirus group K member 8 Env polyprotein (699 aa).

Residues 1 to 47 (MNPSEMQRKAPPRRRRHRNRAPLTHKMNKMVTSEEQMKLPSTKKAEP) form a disordered region. An N-terminal signal peptide occupies residues 1-89 (MNPSEMQRKA…ALMIVSMVVS (89 aa)). Positions 10–20 (APPRRRRHRNR) are enriched in basic residues. Residues 90–632 (LPMPAGAAVA…NLNPVTWVKT (543 aa)) are Extracellular-facing. 7 N-linked (GlcNAc...) asparagine glycosylation sites follow: N100, N128, N153, N274, N355, N372, and N461. The interval 466 to 486 (FIFTLIAVIMGLIAVTATAAV) is fusion peptide. N-linked (GlcNAc...) asparagine glycans are attached at residues N507, N554, N566, and N585. Residues 633 to 653 (IGSTTIINLILILVCLFCLLL) form a helical membrane-spanning segment. Residues 654–699 (VCRCTQQLRRDSDHRERAMMTMAVLSKRKGGNVGKSKRDQIVTVSV) are Cytoplasmic-facing.

The protein belongs to the beta type-B retroviral envelope protein family. HERV class-II K(HML-2) env subfamily. The surface (SU) and transmembrane (TM) proteins form a heterodimer. SU and TM are attached by noncovalent interactions or by a labile interchain disulfide bond. Post-translationally, specific enzymatic cleavages in vivo yield the mature SU and TM proteins.

The protein localises to the cell membrane. It localises to the virion. In terms of biological role, retroviral envelope proteins mediate receptor recognition and membrane fusion during early infection. Endogenous envelope proteins may have kept, lost or modified their original function during evolution. This endogenous envelope protein has lost its original fusogenic properties. Its function is as follows. SU mediates receptor recognition. Functionally, TM anchors the envelope heterodimer to the viral membrane through one transmembrane domain. The other hydrophobic domain, called fusion peptide, mediates fusion of the viral membrane with the target cell membrane. The polypeptide is Endogenous retrovirus group K member 8 Env polyprotein (ERVK-8) (Homo sapiens (Human)).